Here is a 155-residue protein sequence, read N- to C-terminus: Ribosome maturation factor RimP (155 aa).

This sequence belongs to the RimP family.

The protein resides in the cytoplasm. Functionally, required for maturation of 30S ribosomal subunits. This is Ribosome maturation factor RimP from Listeria monocytogenes serotype 4a (strain HCC23).